A 394-amino-acid chain; its full sequence is HORMA domain-containing protein 1 (394 aa).

The 203-residue stretch at 24–226 folds into the HORMA domain; the sequence is HQSLVLVKRL…TPFHIFKVKV (203 aa). Residues 253 to 282 show a composition bias toward basic and acidic residues; it reads ILRDKDVEDEQEHYTSDDLDIETKMEEQEK. Positions 253-394 are disordered; sequence ILRDKDVEDE…RKFSEPKEHI (142 aa). Over residues 288-300 the composition is skewed to acidic residues; that stretch reads ELEEPSLVCEEDE. 2 stretches are compositionally biased toward polar residues: residues 310 to 324 and 343 to 352; these read LSIS…VNKT and KMANGNQPVK. Over residues 362–374 the composition is skewed to basic and acidic residues; sequence QHESGRIVLHHFD. At S376 the chain carries Phosphoserine. The short motif at 383–386 is the Nuclear localization signal element; that stretch reads KRRK.

As to quaternary structure, interacts with HORMAD2. Interacts with IHO1. In terms of processing, phosphorylated at Ser-377 in a SPO11-dependent manner. In terms of tissue distribution, testis-specific. Over-expressed in carcinomas.

The protein localises to the nucleus. It is found in the chromosome. Plays a key role in meiotic progression. Regulates 3 different functions during meiosis: ensures that sufficient numbers of processed DNA double-strand breaks (DSBs) are available for successful homology search by increasing the steady-state numbers of single-stranded DSB ends. Promotes synaptonemal-complex formation independently of its role in homology search. Plays a key role in the male mid-pachytene checkpoint and the female meiotic prophase checkpoint: required for efficient build-up of ATR activity on unsynapsed chromosome regions, a process believed to form the basis of meiotic silencing of unsynapsed chromatin (MSUC) and meiotic prophase quality control in both sexes. The sequence is that of HORMA domain-containing protein 1 from Homo sapiens (Human).